The following is a 420-amino-acid chain: Serine hydroxymethyltransferase (420 aa).

Residues leucine 121 and 125–127 contribute to the (6S)-5,6,7,8-tetrahydrofolate site; that span reads GHL. Lysine 230 bears the N6-(pyridoxal phosphate)lysine mark. (6S)-5,6,7,8-tetrahydrofolate is bound by residues glutamate 246 and 354-356; that span reads SPF.

Belongs to the SHMT family. In terms of assembly, homodimer. Requires pyridoxal 5'-phosphate as cofactor.

It is found in the cytoplasm. The enzyme catalyses (6R)-5,10-methylene-5,6,7,8-tetrahydrofolate + glycine + H2O = (6S)-5,6,7,8-tetrahydrofolate + L-serine. The protein operates within one-carbon metabolism; tetrahydrofolate interconversion. It participates in amino-acid biosynthesis; glycine biosynthesis; glycine from L-serine: step 1/1. Catalyzes the reversible interconversion of serine and glycine with tetrahydrofolate (THF) serving as the one-carbon carrier. This reaction serves as the major source of one-carbon groups required for the biosynthesis of purines, thymidylate, methionine, and other important biomolecules. Also exhibits THF-independent aldolase activity toward beta-hydroxyamino acids, producing glycine and aldehydes, via a retro-aldol mechanism. In Rickettsia canadensis (strain McKiel), this protein is Serine hydroxymethyltransferase.